A 209-amino-acid polypeptide reads, in one-letter code: Uracil phosphoribosyltransferase (209 aa).

5-phospho-alpha-D-ribose 1-diphosphate is bound by residues R77, R102, and 129-137 (DPMLATGVS). Uracil is bound by residues I192 and 197–199 (GDA). A 5-phospho-alpha-D-ribose 1-diphosphate-binding site is contributed by D198.

This sequence belongs to the UPRTase family. Mg(2+) serves as cofactor.

The catalysed reaction is UMP + diphosphate = 5-phospho-alpha-D-ribose 1-diphosphate + uracil. It participates in pyrimidine metabolism; UMP biosynthesis via salvage pathway; UMP from uracil: step 1/1. Allosterically activated by GTP. In terms of biological role, catalyzes the conversion of uracil and 5-phospho-alpha-D-ribose 1-diphosphate (PRPP) to UMP and diphosphate. The chain is Uracil phosphoribosyltransferase from Metamycoplasma arthritidis (strain 158L3-1) (Mycoplasma arthritidis).